We begin with the raw amino-acid sequence, 1196 residues long: Protein BRASSINOSTEROID INSENSITIVE 1 (1196 aa).

The signal sequence occupies residues 1-23; it reads MKTFSSFFLSVTTLFFFSFFSLS. Positions 62–69 match the Cys pair 1 motif; that stretch reads CTFDGVTC. LRR repeat units follow at residues 71 to 98, 99 to 121, 122 to 146, 148 to 169, 172 to 197, 199 to 221, 222 to 244, 245 to 268, 269 to 290, 291 to 314, 316 to 338, 339 to 363, 364 to 388, 390 to 413, 415 to 439, 441 to 463, 464 to 487, 488 to 511, 513 to 535, 536 to 559, and 561 to 583; these read DDKVTSIDLSSKPLNVGFSAVSSSLLSL, TGLESLFLSNSHINGSVSGFKCS, ASLTSLDLSRNSLSGPVTTLTSLGS, SGLKFLNVSSNTLDFPGKVSGG, LNSLEVLDLSANSISGANVVGWVLSD, CGELKHLAISGNKISGDVDVSRC, VNLEFLDVSSNNFSTGIPFLGDC, SALQHLDISGNKLSGDFSRAISTC, TELKLLNISSNQFVGPIPPLPL, KSLQYLSLAENKFTGEIPDFLSGA, DTLTGLDLSGNHFYGAVPPFFGS, CSLLESLALSSNNFSGELPMDTLLK, MRGLKVLDLSFNEFSGELPESLTNL, ASLLTLDLSSNNFSGPILPNLCQN, KNTLQELYLQNNGFTGKIPPTLSNC, ELVSLHLSFNYLSGTIPSSLGSL, SKLRDLKLWLNMLEGEIPQELMYV, KTLETLILDFNDLTGEIPSGLSNC, NLNWISLSNNRLTGEIPKWIGRL, ENLAILKLSNNSFSGNIPAELGDC, and SLIWLDLNTNLFNGTIPAAMFKQ. N112 carries an N-linked (GlcNAc...) asparagine glycan. N154 carries N-linked (GlcNAc...) asparagine glycosylation. An N-linked (GlcNAc...) asparagine glycan is attached at N233. N275 carries an N-linked (GlcNAc...) asparagine glycan. N-linked (GlcNAc...) asparagine glycosylation is found at N351, N387, N401, and N438. N-linked (GlcNAc...) asparagine glycosylation is present at N510. 2 N-linked (GlcNAc...) asparagine glycosylation sites follow: N545 and N573. Y597 provides a ligand contact to brassinolide. N-linked (GlcNAc...) asparagine glycosylation occurs at N636. Residues 640–642 form an SERK1 binding region; that stretch reads RVY. Residues Y642 and S647 each contribute to the brassinolide site. N653 carries an N-linked (GlcNAc...) asparagine glycan. LRR repeat units follow at residues 653–677, 678–701, 702–725, and 727–750; these read NGSMMFLDMSYNMLSGYIPKEIGSM, PYLFILNLGHNDISGSIPDEVGDL, RGLNILDLSSNKLDGRIPQAMSAL, and MLTEIDLSNNNLSGPIPEMGQFET. Position 705 (N705) interacts with brassinolide. Positions 726-729 are SERK1 binding; the sequence is TMLT. N737 is a glycosylation site (N-linked (GlcNAc...) asparagine). Residues 746–750 are SERK1 binding; it reads GQFET. Residues 763–770 carry the Cys pair 2 motif; the sequence is CGYPLPRC. The helical transmembrane segment at 793–813 threads the bilayer; the sequence is AGSVAMGLLFSFVCIFGLILV. Phosphotyrosine is present on Y831. Phosphoserine is present on S838. Phosphothreonine occurs at positions 842, 846, and 851. S858 is modified (phosphoserine). Phosphothreonine is present on residues T872 and T880. The Protein kinase domain maps to 883-1158; that stretch reads FHNDSLIGSG…VQVMAMFKEI (276 aa). Phosphoserine is present on residues S887 and S891. ATP contacts are provided by residues 889–897 and K911; that span reads IGSGGFGDV. The residue at position 956 (Y956) is a Phosphotyrosine. ATP-binding positions include 957–959 and 963–966; these read EFM and SLED. S981 carries the phosphoserine modification. T982 carries the post-translational modification Phosphothreonine. The active-site Proton acceptor is the D1009. ATP-binding positions include 1009–1014 and D1027; that span reads DMKSSN. S1035 bears the Phosphoserine mark. T1039 bears the Phosphothreonine mark. Phosphoserine is present on residues S1042 and S1044. Residues T1045 and T1049 each carry the phosphothreonine modification. Y1052 is subject to Phosphotyrosine. A Phosphoserine modification is found at S1060. Phosphotyrosine is present on Y1072. Residues S1166 and S1168 each carry the phosphoserine modification. The residue at position 1169 (T1169) is a Phosphothreonine. S1172 and S1179 each carry phosphoserine. T1180 is subject to Phosphothreonine. The residue at position 1187 (S1187) is a Phosphoserine.

The protein belongs to the protein kinase superfamily. Ser/Thr protein kinase family. Monomer or homodimer in the plasma membrane. Heterodimer with BAK1 in the endosomes. Interacts with SERK1 and TTL in a kinase-dependent manner. Bind to SERK1 in a brassinolide-dependent manner. Component of the SERK1 signaling complex, composed of KAPP, CDC48A, GRF6 or GRF7, SERK1, SERK2, SERK3/BAK1 and BRI1. Interacts with CDG1. No interactions with PSKR1 or CNGC17. Interacts with BIK1. Interacts with B'ALPHA, B'BETA, B'GAMMA and B'ETA. Interacts with BSK1 and BSK3. Interacts with BSK5, BSK6 and BSK11. In terms of processing, autophosphorylated on Tyr-831, Tyr-956 and maybe Tyr-1072. Phosphorylated on at least 12 sites, with a preference for Ser residues. Transphosphorylated on Ser-887 by SERK1 and on Ser-838, Thr-846, Ser-858 and Ser-1166 by BAK1. Phosphorylation on Ser-1166 enhances the kinase activity. Glycosylated. As to expression, expressed ubiquitously.

The protein resides in the cell membrane. The protein localises to the endosome membrane. The enzyme catalyses L-seryl-[protein] + ATP = O-phospho-L-seryl-[protein] + ADP + H(+). The catalysed reaction is L-threonyl-[protein] + ATP = O-phospho-L-threonyl-[protein] + ADP + H(+). It carries out the reaction L-tyrosyl-[protein] + ATP = O-phospho-L-tyrosyl-[protein] + ADP + H(+). With respect to regulation, activated by Ser and Thr phosphorylation. Receptor with a dual specificity kinase activity acting on both serine/threonine- and tyrosine-containing substrates. Regulates, in response to brassinosteroid binding, a signaling cascade involved in plant development, including expression of light- and stress-regulated genes, promotion of cell elongation, normal leaf and chloroplast senescence, and flowering. Binds brassinolide (BL), and less effectively castasterone (CS), but not 2,3,22,23-O-tetramethylbrassinolide or ecdysone. May be involved in a feedback regulation of brassinosteroid biosynthesis. Phosphorylates BRI1-associated receptor kinase 1 (BAK1), Transthyretin-Like protein (TTL) and SERK1 on 'Ser-299' and 'Thr-462' in vitro. May have a guanylyl cyclase activity. Phosphorylates BSK1, BSK2 and BSK3 in vitro. Phosphorylates BSK1, BSK3, BSK5, BSK6, BSK8 and BSK11 in vitro. The sequence is that of Protein BRASSINOSTEROID INSENSITIVE 1 from Arabidopsis thaliana (Mouse-ear cress).